We begin with the raw amino-acid sequence, 210 residues long: Keratin-associated protein 4-9 (210 aa).

Repeat copies occupy residues 24-28 (CCRPS), 29-33 (CCETT), 34-38 (CCRTT), 39-43 (CCRPS), 44-48 (CCVSS), 49-53 (CCRPQ), 54-58 (CCQSV), 59-63 (CCQPT), 69-73 (CCQTT), 74-78 (CCRTT), 84-88 (CCVSS), 89-93 (CCRPQ), 94-98 (CCQPA), 99-103 (CCQPT), 104-108 (CCRPS), 109-113 (CCETT), 114-118 (CCHPR), 119-123 (CCISS), 124-128 (CCRPS), 129-133 (CCVSS), 134-138 (CCKPQ), 139-143 (CCQSV), 144-148 (CCQPN), 149-153 (CCRPS), 159-163 (CCRPS), 164-168 (CCESS), 169-173 (CCRPC), and 174-178 (CCVRP). A 29 X 5 AA repeats of C-C-[RQVHIEK]-[SPTR]-[VSTQCRNP] region spans residues 24-178 (CCRPSCCETT…CCRPCCCVRP (155 aa)).

This sequence belongs to the KRTAP type 4 family. As to quaternary structure, interacts with hair keratins. Expressed in the hair follicles.

In terms of biological role, in the hair cortex, hair keratin intermediate filaments are embedded in an interfilamentous matrix, consisting of hair keratin-associated proteins (KRTAP), which are essential for the formation of a rigid and resistant hair shaft through their extensive disulfide bond cross-linking with abundant cysteine residues of hair keratins. The matrix proteins include the high-sulfur and high-glycine-tyrosine keratins. This chain is Keratin-associated protein 4-9 (KRTAP4-9), found in Homo sapiens (Human).